We begin with the raw amino-acid sequence, 312 residues long: Large ribosomal subunit protein uL15m (312 aa).

Residues 63-89 (RIRKGRGPSSGYGKTAGRGTKGQKAHG) are disordered. The segment covering 70 to 82 (PSSGYGKTAGRGT) has biased composition (gly residues).

Belongs to the universal ribosomal protein uL15 family. In terms of assembly, component of the mitochondrial large ribosomal subunit (mt-LSU). Mature N.crassa 74S mitochondrial ribosomes consist of a small (37S) and a large (54S) subunit. The 37S small subunit contains a 16S ribosomal RNA (16S mt-rRNA) and 32 different proteins. The 54S large subunit contains a 23S rRNA (23S mt-rRNA) and 42 different proteins.

It is found in the mitochondrion. Its function is as follows. Component of the mitochondrial ribosome (mitoribosome), a dedicated translation machinery responsible for the synthesis of mitochondrial genome-encoded proteins, including at least some of the essential transmembrane subunits of the mitochondrial respiratory chain. The mitoribosomes are attached to the mitochondrial inner membrane and translation products are cotranslationally integrated into the membrane. The sequence is that of Large ribosomal subunit protein uL15m (mrpl10) from Neurospora crassa (strain ATCC 24698 / 74-OR23-1A / CBS 708.71 / DSM 1257 / FGSC 987).